The following is a 199-amino-acid chain: Protein GrpE (199 aa).

Residues M1–Q17 show a composition bias toward polar residues. Positions M1–F36 are disordered.

Belongs to the GrpE family. As to quaternary structure, homodimer.

Its subcellular location is the cytoplasm. Functionally, participates actively in the response to hyperosmotic and heat shock by preventing the aggregation of stress-denatured proteins, in association with DnaK and GrpE. It is the nucleotide exchange factor for DnaK and may function as a thermosensor. Unfolded proteins bind initially to DnaJ; upon interaction with the DnaJ-bound protein, DnaK hydrolyzes its bound ATP, resulting in the formation of a stable complex. GrpE releases ADP from DnaK; ATP binding to DnaK triggers the release of the substrate protein, thus completing the reaction cycle. Several rounds of ATP-dependent interactions between DnaJ, DnaK and GrpE are required for fully efficient folding. The chain is Protein GrpE from Ehrlichia canis (strain Jake).